We begin with the raw amino-acid sequence, 444 residues long: Putative F-box protein At1g64540 (444 aa).

Positions 4–50 constitute an F-box domain; it reads REFISNLPDEILGKILSLLPTKLGVSTSVLSKRWRNLILLVDNFDLE.

The sequence is that of Putative F-box protein At1g64540 from Arabidopsis thaliana (Mouse-ear cress).